Consider the following 269-residue polypeptide: Orotidine 5'-phosphate decarboxylase (269 aa).

Residue lysine 92 is the Proton donor of the active site.

Belongs to the OMP decarboxylase family. Type 2 subfamily.

It catalyses the reaction orotidine 5'-phosphate + H(+) = UMP + CO2. Its pathway is pyrimidine metabolism; UMP biosynthesis via de novo pathway; UMP from orotate: step 2/2. This is Orotidine 5'-phosphate decarboxylase from Natronomonas pharaonis (strain ATCC 35678 / DSM 2160 / CIP 103997 / JCM 8858 / NBRC 14720 / NCIMB 2260 / Gabara) (Halobacterium pharaonis).